The following is a 164-amino-acid chain: Galectin-3 (164 aa).

In terms of domain architecture, Galectin spans 9 to 154; that stretch reads STVDLSEPLK…FSDVLGVTVL (146 aa). The a carbohydrate site is built by His-60, Arg-64, Asn-73, and Glu-84.

Homotetramer. Oligomerization is required for carbohydrate binding.

The protein localises to the secreted. Its subcellular location is the extracellular space. The protein resides in the extracellular matrix. It is found in the cell wall. Functionally, binds lactose. May play a role in fruiting body formation. The sequence is that of Galectin-3 (Cgl3) from Coprinopsis cinerea (strain Okayama-7 / 130 / ATCC MYA-4618 / FGSC 9003) (Inky cap fungus).